Consider the following 119-residue polypeptide: Large ribosomal subunit protein bL20 (119 aa).

The protein belongs to the bacterial ribosomal protein bL20 family.

Binds directly to 23S ribosomal RNA and is necessary for the in vitro assembly process of the 50S ribosomal subunit. It is not involved in the protein synthesizing functions of that subunit. This chain is Large ribosomal subunit protein bL20, found in Nitrobacter winogradskyi (strain ATCC 25391 / DSM 10237 / CIP 104748 / NCIMB 11846 / Nb-255).